The chain runs to 134 residues: Small ribosomal subunit protein bS6 (134 aa).

The span at 113-122 (NKDIKEKEQP) shows a compositional bias: basic and acidic residues. The interval 113–134 (NKDIKEKEQPSESNVDADLKVN) is disordered.

Belongs to the bacterial ribosomal protein bS6 family.

Its function is as follows. Binds together with bS18 to 16S ribosomal RNA. The polypeptide is Small ribosomal subunit protein bS6 (Borrelia recurrentis (strain A1)).